Reading from the N-terminus, the 1187-residue chain is ATP-dependent DNA helicase MER3 (1187 aa).

Residues 1-41 (MKTKFDRLGTGKRSRPSPNNIDFNDQSATFKRNKKNSRQPS) are disordered. Residues 16-30 (PSPNNIDFNDQSATF) show a composition bias toward polar residues. The 175-residue stretch at 148 to 322 (PSIYESNENC…WLKTNNELPA (175 aa)) folds into the Helicase ATP-binding domain. 161-168 (SPTGSGKT) is an ATP binding site. Positions 268–271 (DEIH) match the DEIH box motif. The region spanning 360–542 (KLIEIIEKHA…NLIEHLAAET (183 aa)) is the Helicase C-terminal domain. Residues 616–922 (STAYGNAMTR…PKLEKIEFSI (307 aa)) form the SEC63 domain. The segment at 1039–1054 (CFHSCKDKTQCRHLCC) adopts a C4-type zinc-finger fold. Residues 1146-1187 (NCPEIIPIDLESSDSYSSNTAASSISDPNGDLDFLGSDIEFE) are disordered. Positions 1158 to 1171 (SDSYSSNTAASSIS) are enriched in low complexity.

This sequence belongs to the helicase family. SKI2 subfamily. Oligomerizes. Requires a divalent metal cation as cofactor. Zn(2+) is required as a cofactor.

It is found in the nucleus. It catalyses the reaction Couples ATP hydrolysis with the unwinding of duplex DNA by translocating in the 3'-5' direction.. The catalysed reaction is ATP + H2O = ADP + phosphate + H(+). Its function is as follows. DNA-dependent ATPase and 3'-5' DNA helicase. Required in the control of double strand break transition and crossover during meiosis. ATPase is slightly better stimulated by single-stranded (ss) than double-stranded (ds)DNA. Unwinds Holliday junction (HJ) DNA to Y-DNA and to ssDNA. Efficient unwinding requires 6 nucleotides of 3'-ssDNA; seems to initiate unwinding from blunt ends when they open slightly. Binds HJ, dsDNA, ssDNA and 3'- and 5-overhang DNA. This Saccharomyces cerevisiae (strain ATCC 204508 / S288c) (Baker's yeast) protein is ATP-dependent DNA helicase MER3.